Consider the following 337-residue polypeptide: Gastrula zinc finger protein XlCGF26.1 (337 aa).

12 C2H2-type zinc fingers span residues 6–28 (FDCT…YKIH), 34–56 (FICA…SKIH), 62–84 (FPCT…NKIH), 90–112 (FICA…SKIH), 118–140 (FPCT…NKIH), 146–168 (FICA…SKIH), 174–196 (FPCT…NKIH), 202–224 (FTCT…VKIH), 230–252 (FTCT…NKIH), 258–280 (FTCT…FKIH), 286–309 (FSCT…KRTH), and 315–337 (FTCT…NKIH).

Belongs to the krueppel C2H2-type zinc-finger protein family.

The protein localises to the nucleus. May be involved in transcriptional regulation. In Xenopus laevis (African clawed frog), this protein is Gastrula zinc finger protein XlCGF26.1.